The chain runs to 107 residues: Iron-binding protein IscA (107 aa).

Residues Cys35, Cys99, and Cys101 each contribute to the Fe cation site.

This sequence belongs to the HesB/IscA family. In terms of assembly, homodimer; may form tetramers and higher multimers. It depends on Fe cation as a cofactor.

Its function is as follows. Is able to transfer iron-sulfur clusters to apo-ferredoxin. Multiple cycles of [2Fe2S] cluster formation and transfer are observed, suggesting that IscA acts catalytically. Recruits intracellular free iron so as to provide iron for the assembly of transient iron-sulfur cluster in IscU in the presence of IscS, L-cysteine and the thioredoxin reductase system TrxA/TrxB. The polypeptide is Iron-binding protein IscA (Klebsiella pneumoniae (strain 342)).